The following is a 253-amino-acid chain: Ribosomal RNA small subunit methyltransferase I (253 aa).

Over residues 230-246 the composition is skewed to basic and acidic residues; the sequence is RKEQRSQRSFSKGDKKP. The tract at residues 230 to 253 is disordered; sequence RKEQRSQRSFSKGDKKPSFKRFKK.

It belongs to the methyltransferase superfamily. RsmI family.

It localises to the cytoplasm. It catalyses the reaction cytidine(1402) in 16S rRNA + S-adenosyl-L-methionine = 2'-O-methylcytidine(1402) in 16S rRNA + S-adenosyl-L-homocysteine + H(+). Catalyzes the 2'-O-methylation of the ribose of cytidine 1402 (C1402) in 16S rRNA. The polypeptide is Ribosomal RNA small subunit methyltransferase I (Leptospira borgpetersenii serovar Hardjo-bovis (strain L550)).